We begin with the raw amino-acid sequence, 273 residues long: Large ribosomal subunit protein uL2 (273 aa).

Disordered regions lie at residues 28–53 (KPFA…TTRH) and 221–273 (RGTA…RRSK). Residues 39 to 48 (KSGGRNNNGR) are compositionally biased toward low complexity. An N6-acetyllysine modification is found at Lys-242.

Belongs to the universal ribosomal protein uL2 family. In terms of assembly, part of the 50S ribosomal subunit. Forms a bridge to the 30S subunit in the 70S ribosome.

Its function is as follows. One of the primary rRNA binding proteins. Required for association of the 30S and 50S subunits to form the 70S ribosome, for tRNA binding and peptide bond formation. It has been suggested to have peptidyltransferase activity; this is somewhat controversial. Makes several contacts with the 16S rRNA in the 70S ribosome. The polypeptide is Large ribosomal subunit protein uL2 (Escherichia coli (strain SE11)).